Reading from the N-terminus, the 301-residue chain is UDP-3-O-acyl-N-acetylglucosamine deacetylase (301 aa).

Zn(2+) is bound by residues His-75, His-233, and Asp-237. The active-site Proton donor is the His-260.

It belongs to the LpxC family. The cofactor is Zn(2+).

It carries out the reaction a UDP-3-O-[(3R)-3-hydroxyacyl]-N-acetyl-alpha-D-glucosamine + H2O = a UDP-3-O-[(3R)-3-hydroxyacyl]-alpha-D-glucosamine + acetate. It participates in glycolipid biosynthesis; lipid IV(A) biosynthesis; lipid IV(A) from (3R)-3-hydroxytetradecanoyl-[acyl-carrier-protein] and UDP-N-acetyl-alpha-D-glucosamine: step 2/6. Its function is as follows. Catalyzes the hydrolysis of UDP-3-O-myristoyl-N-acetylglucosamine to form UDP-3-O-myristoylglucosamine and acetate, the committed step in lipid A biosynthesis. This is UDP-3-O-acyl-N-acetylglucosamine deacetylase from Aliarcobacter butzleri (strain RM4018) (Arcobacter butzleri).